The sequence spans 147 residues: Putative pre-16S rRNA nuclease (147 aa).

This sequence belongs to the YqgF nuclease family.

It is found in the cytoplasm. Its function is as follows. Could be a nuclease involved in processing of the 5'-end of pre-16S rRNA. In Ligilactobacillus salivarius (strain UCC118) (Lactobacillus salivarius), this protein is Putative pre-16S rRNA nuclease.